Reading from the N-terminus, the 219-residue chain is Thiamine-phosphate synthase (219 aa).

Residues Gln-44 to Lys-48 and Asn-79 each bind 4-amino-2-methyl-5-(diphosphooxymethyl)pyrimidine. Residues Asp-80 and Asp-99 each contribute to the Mg(2+) site. Ser-117 is a binding site for 4-amino-2-methyl-5-(diphosphooxymethyl)pyrimidine. 2-[(2R,5Z)-2-carboxy-4-methylthiazol-5(2H)-ylidene]ethyl phosphate is bound at residue Thr-143–Thr-145. Lys-146 contacts 4-amino-2-methyl-5-(diphosphooxymethyl)pyrimidine. 2-[(2R,5Z)-2-carboxy-4-methylthiazol-5(2H)-ylidene]ethyl phosphate-binding positions include Gly-175 and Ile-195–Ser-196.

This sequence belongs to the thiamine-phosphate synthase family. The cofactor is Mg(2+).

The enzyme catalyses 2-[(2R,5Z)-2-carboxy-4-methylthiazol-5(2H)-ylidene]ethyl phosphate + 4-amino-2-methyl-5-(diphosphooxymethyl)pyrimidine + 2 H(+) = thiamine phosphate + CO2 + diphosphate. It carries out the reaction 2-(2-carboxy-4-methylthiazol-5-yl)ethyl phosphate + 4-amino-2-methyl-5-(diphosphooxymethyl)pyrimidine + 2 H(+) = thiamine phosphate + CO2 + diphosphate. The catalysed reaction is 4-methyl-5-(2-phosphooxyethyl)-thiazole + 4-amino-2-methyl-5-(diphosphooxymethyl)pyrimidine + H(+) = thiamine phosphate + diphosphate. The protein operates within cofactor biosynthesis; thiamine diphosphate biosynthesis; thiamine phosphate from 4-amino-2-methyl-5-diphosphomethylpyrimidine and 4-methyl-5-(2-phosphoethyl)-thiazole: step 1/1. In terms of biological role, condenses 4-methyl-5-(beta-hydroxyethyl)thiazole monophosphate (THZ-P) and 2-methyl-4-amino-5-hydroxymethyl pyrimidine pyrophosphate (HMP-PP) to form thiamine monophosphate (TMP). The sequence is that of Thiamine-phosphate synthase from Bacillus cereus (strain AH820).